A 131-amino-acid chain; its full sequence is D-ribose pyranase (131 aa).

The active-site Proton donor is the His20. Substrate is bound by residues Asp28, His98, and Tyr120–Asn122.

It belongs to the RbsD / FucU family. RbsD subfamily. Homodecamer.

The protein localises to the cytoplasm. The catalysed reaction is beta-D-ribopyranose = beta-D-ribofuranose. The protein operates within carbohydrate metabolism; D-ribose degradation; D-ribose 5-phosphate from beta-D-ribopyranose: step 1/2. Its function is as follows. Catalyzes the interconversion of beta-pyran and beta-furan forms of D-ribose. This chain is D-ribose pyranase, found in Bacillus cytotoxicus (strain DSM 22905 / CIP 110041 / 391-98 / NVH 391-98).